The chain runs to 428 residues: ATP-dependent RNA helicase RhlB (428 aa).

Positions 9-37 match the Q motif motif; sequence QKFSDFALHPLVVEALENKGFQYCTPIQA. Positions 40–219 constitute a Helicase ATP-binding domain; it reads LPLTLSGRDV…FEQMNNAEYV (180 aa). An ATP-binding site is contributed by 53–60; it reads AQTGTGKT. Positions 165–168 match the DEAD box motif; that stretch reads DEAD. One can recognise a Helicase C-terminal domain in the interval 245 to 390; sequence RLLQTLIEEE…VSKYNSDALL (146 aa). A disordered region spans residues 394–428; sequence PAPKRLARTRTGNGPRRNSAPRRSGAPRNNRKRPG.

Belongs to the DEAD box helicase family. RhlB subfamily. In terms of assembly, component of the RNA degradosome, which is a multiprotein complex involved in RNA processing and mRNA degradation.

Its subcellular location is the cytoplasm. It catalyses the reaction ATP + H2O = ADP + phosphate + H(+). Its function is as follows. DEAD-box RNA helicase involved in RNA degradation. Has RNA-dependent ATPase activity and unwinds double-stranded RNA. The polypeptide is ATP-dependent RNA helicase RhlB (Yersinia pseudotuberculosis serotype O:1b (strain IP 31758)).